The following is a 118-amino-acid chain: uncharacterized protein (118 aa).

Belongs to the HesB/IscA family. Ycf83 subfamily.

This is an uncharacterized protein from Synechocystis sp. (strain ATCC 27184 / PCC 6803 / Kazusa).